The sequence spans 381 residues: Creatine kinase M-type (381 aa).

Residues 11-98 (KLNFKAEEEY…FDPIIQDRHG (88 aa)) form the Phosphagen kinase N-terminal domain. One can recognise a Phosphagen kinase C-terminal domain in the interval 125 to 367 (YVLSSRVRTG…KLMVEMEKKL (243 aa)). An ATP-binding site is contributed by 128–132 (SSRVR). S164 bears the Phosphoserine mark. T166 is modified (phosphothreonine). Residue S178 is modified to Phosphoserine. A Phosphothreonine modification is found at T180. Position 191 (H191) interacts with ATP. S199 is subject to Phosphoserine. Residues R236 and R292 each coordinate ATP. A phosphothreonine mark is found at T313 and T322. ATP-binding positions include 320-325 (RGTGGV) and D335. S372 bears the Phosphoserine mark.

The protein belongs to the ATP:guanido phosphotransferase family. Dimer of identical or non-identical chains, which can be either B (brain type) or M (muscle type). With MM being the major form in skeletal muscle and myocardium, MB existing in myocardium, and BB existing in many tissues, especially brain.

The catalysed reaction is creatine + ATP = N-phosphocreatine + ADP + H(+). Functionally, reversibly catalyzes the transfer of phosphate between ATP and various phosphogens (e.g. creatine phosphate). Creatine kinase isoenzymes play a central role in energy transduction in tissues with large, fluctuating energy demands, such as skeletal muscle, heart, brain and spermatozoa. This is Creatine kinase M-type (CKM) from Sus scrofa (Pig).